The primary structure comprises 429 residues: Serine/threonine-protein kinase BGLF4 (429 aa).

The disordered stretch occupies residues 1–27 (MDVNMAAELSPTNSSSSGELSVSPEPP). Residues 1-409 (MDVNMAAELS…CRPRFEHPHL (409 aa)) enclose the Protein kinase domain. Over residues 14 to 23 (SSSSGELSVS) the composition is skewed to low complexity. The interval 36-40 (KVTVI) is SUMO interaction motif. Residues 110 to 118 (LYHELMVCD) and Glu-128 each bind ATP. The active-site Proton acceptor is the Asp-195. The segment at 344-350 (VVLLEVL) is SUMO interaction motif.

This sequence belongs to the protein kinase superfamily. Ser/Thr protein kinase family. In terms of assembly, interacts with host NUP62 and NUP153; this interaction plays a role in nuclear targeting of BGLF4. Interacts with host SUMO1 and SUMO2.

It is found in the virion tegument. It localises to the host nucleus. It carries out the reaction L-seryl-[protein] + ATP = O-phospho-L-seryl-[protein] + ADP + H(+). The catalysed reaction is L-threonyl-[protein] + ATP = O-phospho-L-threonyl-[protein] + ADP + H(+). Plays many key roles by phosphorylating several proteins including the viral DNA processivity factor BMRF1, EBNA1 or EBNA2. Modifies the host nuclear envelope structure and induces the redistribution of nuclear envelope-associated proteins by phosphorylating host nucleoporins. Subsequently, promotes the nuclear transport of EBV lytic proteins. Required for efficient lytic DNA replication and release of nucleocapsids from the nucleus. Contributes to the compaction of host cell chromatin in cells undergoing lytic replication, presumably by phosphorylating the host condensin complex and host TOP2A. Induces disassembly of the nuclear lamina by phosphorylating with host LMNA. Phosphorylates substrates involved in capsid assembly and DNA packaging. Facilitates the switch from latent to lytic DNA replication by down-regulating EBNA1 replication function. Phosphorylates the viral immediate-early protein BZLF1 and inhibits its sumoylation by interacting with host SUMO1 and SUMO2. Phosphorylates also host SAMHD1 and thereby counteracts its antiviral effect by reducing its dNTP hydrolase activity. The chain is Serine/threonine-protein kinase BGLF4 from Epstein-Barr virus (strain AG876) (HHV-4).